The sequence spans 253 residues: MALSSSKFSSFSGFSLSPVSGNGVQKPCFCDLRVGEKWGSRKFRVSATTAPLTGVIFEPFEEVKKDYLAVPSVPLVSLARQNFADECESVINEQINVEYNASYVYHSLFAYFDRDNVALKGFAKFFKESSEEHREHAEKLMKYQNTRGGRVVLHPIKDVPSEFEHVEKGDALYAMELALSLEKLTNEKLLNVHSVAERNNDLEMTHFIEGEYLAEQVEAIKKISEYVAQLRRVGKGHGVWHFDQRLLHGVHGA.

A chloroplast-targeting transit peptide spans 1-47 (MALSSSKFSSFSGFSLSPVSGNGVQKPCFCDLRVGEKWGSRKFRVSA). Residues 48 to 80 (TTAPLTGVIFEPFEEVKKDYLAVPSVPLVSLAR) are extension peptide (EP). Residues 81–234 (QNFADECESV…EYVAQLRRVG (154 aa)) form the Ferritin-like diiron domain. Residues Glu-98, His-136, Glu-182, and Gln-216 each contribute to the Fe cation site.

It belongs to the ferritin family. As to quaternary structure, oligomer of 24 subunits. There are two types of subunits: L (light) chain and H (heavy) chain. The major chain can be light or heavy, depending on the species and tissue type. The functional molecule forms a roughly spherical shell with a diameter of 12 nm and contains a central cavity into which the insoluble mineral iron core is deposited.

Its subcellular location is the plastid. The protein resides in the chloroplast. It carries out the reaction 4 Fe(2+) + O2 + 4 H(+) = 4 Fe(3+) + 2 H2O. Its function is as follows. Stores iron in a soluble, non-toxic, readily available form. Important for iron homeostasis. Has ferroxidase activity. Iron is taken up in the ferrous form and deposited as ferric hydroxides after oxidation. The polypeptide is Ferritin-1, chloroplastic (Pisum sativum (Garden pea)).